We begin with the raw amino-acid sequence, 478 residues long: Zinc metalloproteinase/disintegrin (478 aa).

The N-terminal stretch at 1 to 20 is a signal peptide; it reads MIQVLLVTICLAAFPYQGSS. The propeptide occupies 21–187; it reads IILESGNVND…PIKKASDLNL (167 aa). In terms of domain architecture, Peptidase M12B spans 193–389; it reads RYVELFIVVD…QKPQCILKKP (197 aa). Intrachain disulfides connect Cys-304-Cys-384, Cys-344-Cys-368, and Cys-346-Cys-351. His-329 contributes to the Zn(2+) binding site. Glu-330 is a catalytic residue. Zn(2+) is bound by residues His-333 and His-339. Residues 390–407 constitute a propeptide that is removed on maturation; that stretch reads LRTDTVSTPVSGNELLEA. Residues 397–478 enclose the Disintegrin domain; that stretch reads TPVSGNELLE…ADCPRNGLYG (82 aa). Intrachain disulfides connect Cys-411/Cys-426, Cys-413/Cys-421, Cys-420/Cys-443, Cys-434/Cys-440, Cys-439/Cys-464, and Cys-452/Cys-471. Residues 456–458 carry the Cell attachment site; atypical (MVD) motif; the sequence is MVD.

It belongs to the venom metalloproteinase (M12B) family. P-II subfamily. P-IIa sub-subfamily. In terms of assembly, monomer (disintegrin). Zn(2+) serves as cofactor. Expressed by the venom gland.

It localises to the secreted. The catalysed reaction is Cleavage of 3-Asn-|-Gln-4, 9-Ser-|-His-10 and 14-Ala-|-Leu-15 bonds in insulin B chain and 14-Tyr-|-Gln-15 and 8-Thr-|-Ser-9 in A chain. Cleaves type IV collagen at 73-Ala-|-Gln-74 in alpha1-(IV) and at 7-Gly-|-Leu-8 in alpha2-(IV).. Its function is as follows. Snake venom zinc metalloproteinase that causes hemorrhage by provoking the degradation of the sub-endothelial matrix proteins (fibronectin, laminin, type IV collagen, nidogen, and gelatins). Functionally, potent inhibitor of both collagen- (IC(50)=4 nM) and ADP-induced (IC(50)=8 nM) platelet aggregation. May act by binding to the platelet receptor GPIIb/GPIIIa (ITGA2B/ITGB3). This Crotalus atrox (Western diamondback rattlesnake) protein is Zinc metalloproteinase/disintegrin.